Here is a 275-residue protein sequence, read N- to C-terminus: MSTYLIGDIHGCYRELRALLTKANFDPTKDTLWLTGDLVARGPDSLKVLRYVKQLGSAARMVLGNHDLHLLGVYAGISRNKPKDKIDTLLSAPDADELINWLRKQPLLQFDDDLKLLMTHAGITPQWDLETAKMCASEVETMFNSSCYPLFLNSMYGDMPNNWSPELSGLARLRFSTNALTRMRYCFPNGQLDMLCKDKPENAPAPLKPWFELERQIPPEYAIVFGHWASLEGQGTPDSFYALDTGCCWGGQLTMLRWEDKQYFTQSSLPAVKQH.

It belongs to the Ap4A hydrolase family.

It carries out the reaction P(1),P(4)-bis(5'-adenosyl) tetraphosphate + H2O = 2 ADP + 2 H(+). Functionally, hydrolyzes diadenosine 5',5'''-P1,P4-tetraphosphate to yield ADP. This chain is Bis(5'-nucleosyl)-tetraphosphatase, symmetrical, found in Photorhabdus laumondii subsp. laumondii (strain DSM 15139 / CIP 105565 / TT01) (Photorhabdus luminescens subsp. laumondii).